The chain runs to 819 residues: Protein EFR3 homolog A (819 aa).

A disordered region spans residues 210–230; sequence DTDSRTGPPASPTTGDKEENP.

This sequence belongs to the EFR3 family. As to quaternary structure, component of a phosphatidylinositol 4-kinase (PI4K) complex. Post-translationally, palmitoylated at its N-terminus, anchoring the protein to the plasma membrane.

Its subcellular location is the cell membrane. In terms of biological role, component of a complex required to localize phosphatidylinositol 4-kinase (PI4K) to the plasma membrane. The complex acts as a regulator of phosphatidylinositol 4-phosphate (PtdIns(4)P) synthesis. In the complex, efr3a probably acts as the membrane-anchoring component. This is Protein EFR3 homolog A (efr3a) from Xenopus laevis (African clawed frog).